Here is an 80-residue protein sequence, read N- to C-terminus: WAP four-disulfide core domain protein 15B (80 aa).

An N-terminal signal peptide occupies residues 1–20 (MKLLGLSLLAVTILLCCNMA). Residues 29–76 (VFSKPGYCPEYRVPCPFVLIPKCRRDKGCKDALKCCFFYCQMRCVDPW) form the WAP domain. Cystine bridges form between cysteine 36–cysteine 64, cysteine 43–cysteine 68, cysteine 51–cysteine 63, and cysteine 57–cysteine 72.

As to expression, constitutively expressed in kidney and epididymis.

It is found in the secreted. Functionally, antibacterial protein which inhibits the growth of E.coli and S.aureus. The protein is WAP four-disulfide core domain protein 15B (Wfdc15b) of Mus musculus (Mouse).